Consider the following 97-residue polypeptide: Homeobox protein HD-9 (97 aa).

Residues 6–65 (MPAKKSRLSKAQRDFLDTYFEVNPHPNTQERAYIASQSLVSEEKIRNWFQNRRTRERGDC) constitute a DNA-binding region (homeobox).

It is found in the nucleus. This Encephalitozoon cuniculi (strain GB-M1) (Microsporidian parasite) protein is Homeobox protein HD-9 (HD-9).